The primary structure comprises 657 residues: tRNA 5-methylaminomethyl-2-thiouridine biosynthesis bifunctional protein MnmC (657 aa).

Positions 1–239 are tRNA (mnm(5)s(2)U34)-methyltransferase; the sequence is MTDRIVPATL…KRAMLVGEFA (239 aa). Residues 263 to 657 are FAD-dependent cmnm(5)s(2)U34 oxidoreductase; it reads IGAGLAGCAV…VRALRHGRVA (395 aa).

This sequence in the N-terminal section; belongs to the methyltransferase superfamily. tRNA (mnm(5)s(2)U34)-methyltransferase family. It in the C-terminal section; belongs to the DAO family. FAD is required as a cofactor.

Its subcellular location is the cytoplasm. It catalyses the reaction 5-aminomethyl-2-thiouridine(34) in tRNA + S-adenosyl-L-methionine = 5-methylaminomethyl-2-thiouridine(34) in tRNA + S-adenosyl-L-homocysteine + H(+). Functionally, catalyzes the last two steps in the biosynthesis of 5-methylaminomethyl-2-thiouridine (mnm(5)s(2)U) at the wobble position (U34) in tRNA. Catalyzes the FAD-dependent demodification of cmnm(5)s(2)U34 to nm(5)s(2)U34, followed by the transfer of a methyl group from S-adenosyl-L-methionine to nm(5)s(2)U34, to form mnm(5)s(2)U34. In Burkholderia pseudomallei (strain 668), this protein is tRNA 5-methylaminomethyl-2-thiouridine biosynthesis bifunctional protein MnmC.